The chain runs to 182 residues: uncharacterized protein (182 aa).

It to H.pylori HP0274.

This is an uncharacterized protein from Methanocaldococcus jannaschii (strain ATCC 43067 / DSM 2661 / JAL-1 / JCM 10045 / NBRC 100440) (Methanococcus jannaschii).